Consider the following 124-residue polypeptide: Holo-[acyl-carrier-protein] synthase (124 aa).

Positions 7 and 55 each coordinate Mg(2+).

It belongs to the P-Pant transferase superfamily. AcpS family. The cofactor is Mg(2+).

It localises to the cytoplasm. It catalyses the reaction apo-[ACP] + CoA = holo-[ACP] + adenosine 3',5'-bisphosphate + H(+). Functionally, transfers the 4'-phosphopantetheine moiety from coenzyme A to a Ser of acyl-carrier-protein. The protein is Holo-[acyl-carrier-protein] synthase of Borreliella burgdorferi (strain ATCC 35210 / DSM 4680 / CIP 102532 / B31) (Borrelia burgdorferi).